Here is a 92-residue protein sequence, read N- to C-terminus: Acylphosphatase (92 aa).

The Acylphosphatase-like domain occupies 5-92; it reads YIVAYVYGVV…TPFETFSIRY (88 aa). Residues arginine 20 and asparagine 38 contribute to the active site.

This sequence belongs to the acylphosphatase family.

The catalysed reaction is an acyl phosphate + H2O = a carboxylate + phosphate + H(+). The polypeptide is Acylphosphatase (acyP) (Yersinia pseudotuberculosis serotype O:1b (strain IP 31758)).